The chain runs to 1158 residues: ATP-dependent helicase/deoxyribonuclease subunit B (1158 aa).

The UvrD-like helicase ATP-binding domain maps to 1-275 (MTLHAYLGRA…QYFNQLYRFN (275 aa)). 8–15 (GRAGTGKS) contacts ATP. Positions 269-583 (NQLYRFNNQD…SIGTMDLAKV (315 aa)) constitute a UvrD-like helicase C-terminal domain. The [4Fe-4S] cluster site is built by Cys784, Cys1112, Cys1115, and Cys1121.

This sequence belongs to the helicase family. AddB/RexB type 1 subfamily. Heterodimer of AddA and AddB. The cofactor is Mg(2+). [4Fe-4S] cluster serves as cofactor.

Its function is as follows. The heterodimer acts as both an ATP-dependent DNA helicase and an ATP-dependent, dual-direction single-stranded exonuclease. Recognizes the chi site generating a DNA molecule suitable for the initiation of homologous recombination. The AddB subunit has 5' -&gt; 3' nuclease activity but not helicase activity. This is ATP-dependent helicase/deoxyribonuclease subunit B from Staphylococcus aureus (strain COL).